The sequence spans 561 residues: Cloacin (561 aa).

3 stretches are compositionally biased toward gly residues: residues 1-21 (MSGG…GGQA), 29-40 (SGKGGPSSGGGT), and 66-91 (FGNG…GGGQ). Disordered regions lie at residues 1–93 (MSGG…GQSS), 254–273 (PKGI…TAGG), 304–326 (VKQR…PEEG), 432–507 (KAAL…KRAR), and 530–561 (RASD…KKYL). An involved in the translocation of the protein across the cell membrane region spans residues 1–180 (MSGGDGRGPG…DTVTETPAST (180 aa)). The responsible for the receptor binding activity stretch occupies residues 200 to 420 (DERQHIAVVA…NAKLKAAQAS (221 aa)). Basic and acidic residues-rich tracts occupy residues 306-326 (QRQE…PEEG) and 440-494 (ESRK…EGKP). A ribonuclease activity region spans residues 421–561 (LNAMNDALSR…DPKRNIKKYL (141 aa)). The binding of immunity protein stretch occupies residues 540–561 (FDPKTGKQVKGPDPKRNIKKYL).

It belongs to the cloacin colicin family.

Inactivates ribosomes by hydrolyzing 16S RNA in 30S ribosomes at a specific site. Functionally, colicins are polypeptide toxins produced by and active against E.coli and closely related bacteria. This is Cloacin (ccl) from Escherichia coli.